Here is a 722-residue protein sequence, read N- to C-terminus: Probable C-mannosyltransferase DPY19L4 (722 aa).

The segment at 1–34 (MAKEEGTSVEPRQRKKQRTSGSQEAKAEKIRRTP) is disordered. The residue at position 2 (Ala-2) is an N-acetylalanine. Positions 25 to 34 (AKAEKIRRTP) are enriched in basic and acidic residues. 12 helical membrane-spanning segments follow: residues 51–71 (IVIG…YLSA), 160–177 (VYFY…YVTA), 183–201 (WLMS…WFLI), 246–262 (FCYL…MMVW), 268–284 (VLFL…IFSV), 291–307 (YEVY…GYLL), 313–331 (ALLV…LVKC), 351–369 (FYLL…KMFV), 420–440 (LLPF…QVFF), 465–485 (IIYH…MEGL), 487–507 (FIWT…PELW), and 521–541 (PMLL…LSLW).

This sequence belongs to the dpy-19 family.

The protein resides in the membrane. Probable C-mannosyltransferase that mediates C-mannosylation of tryptophan residues on target proteins. The protein is Probable C-mannosyltransferase DPY19L4 (Dpy19l4) of Mus musculus (Mouse).